Consider the following 142-residue polypeptide: MEIIPHRHPFLLIDRVLELEPGRRVVAVKNVSMNEPVFQGHYPGNPIFPGVLILEAMAQAGAVAVLSQPEFAGKVPLFAGIDDARFRRPVLPGDQLRLEVEMVAMRRGLGVGKGMAYVGDELKAEATLKFALVDAATPEPAR.

Residue histidine 41 is part of the active site.

Belongs to the thioester dehydratase family. FabZ subfamily.

It localises to the cytoplasm. The enzyme catalyses a (3R)-hydroxyacyl-[ACP] = a (2E)-enoyl-[ACP] + H2O. Functionally, involved in unsaturated fatty acids biosynthesis. Catalyzes the dehydration of short chain beta-hydroxyacyl-ACPs and long chain saturated and unsaturated beta-hydroxyacyl-ACPs. The sequence is that of 3-hydroxyacyl-[acyl-carrier-protein] dehydratase FabZ from Symbiobacterium thermophilum (strain DSM 24528 / JCM 14929 / IAM 14863 / T).